The following is a 462-amino-acid chain: Sensor histidine kinase ZraS (462 aa).

The Cytoplasmic segment spans residues 1 to 14; it reads MNVMRLSKDSVAVG. A helical membrane pass occupies residues 15–35; that stretch reads LSWLLTGLILLLVCLFSALIV. Over 36–197 the chain is Periplasmic; that stretch reads RDYGRENEAA…ADHARGLRNM (162 aa). A helical membrane pass occupies residues 198 to 218; that stretch reads VIMLCAAGVVMAATVLAQFWF. Topologically, residues 219–462 are cytoplasmic; it reads RRYQRSRKQL…VNGQQKDEQG (244 aa). In terms of domain architecture, Histidine kinase spans 247 to 455; the sequence is GVAHEIRNPL…LFTFYLPVNG (209 aa). His-250 carries the post-translational modification Phosphohistidine; by autocatalysis.

Post-translationally, autophosphorylated.

Its subcellular location is the cell inner membrane. It carries out the reaction ATP + protein L-histidine = ADP + protein N-phospho-L-histidine.. Its activity is regulated as follows. Activity of the ZraS/ZraR two-component system is repressed by the zinc-bound form of ZraP, which probably interacts with the periplasmic region of ZraS. In terms of biological role, part of the Zra signaling pathway, an envelope stress response (ESR) system composed of the periplasmic accessory protein ZraP, the histidine kinase ZraS and the transcriptional regulator ZraR. The ZraPSR system contributes to antibiotic resistance and is important for membrane integrity in the presence of membrane-targeting biocides. ZraS is a member of the two-component regulatory system ZraS/ZraR. Functions as a membrane-associated sensor kinase that phosphorylates ZraR in response to high concentrations of Zn(2+) or Pb(2+) in the medium. This Klebsiella oxytoca protein is Sensor histidine kinase ZraS (zraS).